The sequence spans 671 residues: Probable potassium transport system protein Kup 2 (671 aa).

12 helical membrane-spanning segments follow: residues 12–32 (FAGL…SPLY), 56–76 (ISLI…MIAL), 99–119 (WLVI…TLTP), 139–159 (IPVP…VILF), 172–192 (AFGP…IANL), 218–238 (VGIL…ALYS), 251–271 (SWPY…AWIL), 296–316 (LFAI…LITG), 345–365 (IYIP…VFLF), 374–394 (AYGL…FEYL), 400–420 (PLYL…MFLI), and 429–449 (GGYV…VWFY).

It belongs to the HAK/KUP transporter (TC 2.A.72) family.

It is found in the cell membrane. The catalysed reaction is K(+)(in) + H(+)(in) = K(+)(out) + H(+)(out). In terms of biological role, transport of potassium into the cell. Likely operates as a K(+):H(+) symporter. In Lactobacillus acidophilus (strain ATCC 700396 / NCK56 / N2 / NCFM), this protein is Probable potassium transport system protein Kup 2.